The following is an 84-amino-acid chain: Replication regulatory protein repA2 (84 aa).

Positions 1-13 are enriched in polar residues; the sequence is MSQTENAVTSSSG. The segment at 1–31 is disordered; it reads MSQTENAVTSSSGAKRAYRKGNPLSDAEKQR.

Its function is as follows. This protein is involved in the determination of copy number in gene replication. It binds to the repA promoter thus inhibiting the synthesis of the mRNA for the initiator protein repA. This Escherichia coli O157:H7 protein is Replication regulatory protein repA2 (repA2).